The following is a 169-amino-acid chain: ATP-dependent Clp protease adapter protein CLPS2, chloroplastic (169 aa).

Residues 1 to 33 constitute a chloroplast transit peptide; sequence MLATRCKCNLPSRSFVAPARSVRTRALHVEGRF. Positions 67-92 are disordered; it reads DAKTDNGNNGSNTDKDKKSPPGGGNY.

Belongs to the ClpS family.

It is found in the plastid. It localises to the chloroplast stroma. Its function is as follows. Small adapter protein that modulate the activity of plastid Clp protease system (CLPC). Probably involved in substrate selection for plastid CLPC. This chain is ATP-dependent Clp protease adapter protein CLPS2, chloroplastic, found in Chlamydomonas reinhardtii (Chlamydomonas smithii).